We begin with the raw amino-acid sequence, 476 residues long: Glycogen synthase (476 aa).

K15 is a binding site for ADP-alpha-D-glucose.

This sequence belongs to the glycosyltransferase 1 family. Bacterial/plant glycogen synthase subfamily.

It carries out the reaction [(1-&gt;4)-alpha-D-glucosyl](n) + ADP-alpha-D-glucose = [(1-&gt;4)-alpha-D-glucosyl](n+1) + ADP + H(+). The protein operates within glycan biosynthesis; glycogen biosynthesis. Its function is as follows. Synthesizes alpha-1,4-glucan chains using ADP-glucose. The chain is Glycogen synthase from Bacillus cereus (strain Q1).